The following is a 111-amino-acid chain: Probable 4-amino-4-deoxy-L-arabinose-phosphoundecaprenol flippase subunit ArnE (111 aa).

Transmembrane regions (helical) follow at residues 38-58 (LWLG…LLVL), 61-81 (LPVG…TLAA), and 89-109 (VLPR…ILGS). The EamA domain maps to 40–109 (LGLALICMGA…IISGIIILGS (70 aa)).

The protein belongs to the ArnE family. Heterodimer of ArnE and ArnF.

The protein localises to the cell inner membrane. It participates in bacterial outer membrane biogenesis; lipopolysaccharide biosynthesis. Functionally, translocates 4-amino-4-deoxy-L-arabinose-phosphoundecaprenol (alpha-L-Ara4N-phosphoundecaprenol) from the cytoplasmic to the periplasmic side of the inner membrane. This is Probable 4-amino-4-deoxy-L-arabinose-phosphoundecaprenol flippase subunit ArnE from Salmonella paratyphi A (strain ATCC 9150 / SARB42).